A 23-amino-acid polypeptide reads, in one-letter code: Chaperonin GroEL (23 aa).

Belongs to the chaperonin (HSP60) family. Forms a cylinder of 14 subunits composed of two heptameric rings stacked back-to-back. Interacts with the co-chaperonin GroES. In terms of processing, phosphorylated on threonine.

It localises to the cytoplasm. The enzyme catalyses ATP + H2O + a folded polypeptide = ADP + phosphate + an unfolded polypeptide.. Its function is as follows. Together with its co-chaperonin GroES, plays an essential role in assisting protein folding. The GroEL-GroES system forms a nano-cage that allows encapsulation of the non-native substrate proteins and provides a physical environment optimized to promote and accelerate protein folding. The sequence is that of Chaperonin GroEL from Acidithiobacillus ferrooxidans (Thiobacillus ferrooxidans).